The chain runs to 743 residues: NAD(P)H-quinone oxidoreductase subunit 5, chloroplastic (743 aa).

16 consecutive transmembrane segments (helical) span residues 9 to 29 (WIIP…LLLF), 40 to 60 (WAFQ…NLSI), 89 to 109 (IDPL…MVLI), 125 to 145 (FAYM…SNLI), 147 to 167 (IYIF…FWFT), 185 to 205 (GDFG…SFEF), 219 to 239 (NEVN…GAIA), 258 to 278 (TPIS…FLVA), 284 to 304 (FIVI…TVFF), 327 to 347 (LGYM…FHLI), 354 to 374 (ALLF…VGYC), 396 to 416 (NSFL…CFWS), 425 to 445 (WLYS…TAFY), 551 to 571 (LFPI…GIPF), 607 to 627 (VFSV…YKPV), and 723 to 743 (YLFF…FLNL).

Belongs to the complex I subunit 5 family. As to quaternary structure, NDH is composed of at least 16 different subunits, 5 of which are encoded in the nucleus.

Its subcellular location is the plastid. The protein localises to the chloroplast thylakoid membrane. It catalyses the reaction a plastoquinone + NADH + (n+1) H(+)(in) = a plastoquinol + NAD(+) + n H(+)(out). The enzyme catalyses a plastoquinone + NADPH + (n+1) H(+)(in) = a plastoquinol + NADP(+) + n H(+)(out). Its function is as follows. NDH shuttles electrons from NAD(P)H:plastoquinone, via FMN and iron-sulfur (Fe-S) centers, to quinones in the photosynthetic chain and possibly in a chloroplast respiratory chain. The immediate electron acceptor for the enzyme in this species is believed to be plastoquinone. Couples the redox reaction to proton translocation, and thus conserves the redox energy in a proton gradient. This chain is NAD(P)H-quinone oxidoreductase subunit 5, chloroplastic (ndhF), found in Ambrosia trifida (Giant ragweed).